An 88-amino-acid chain; its full sequence is Putative membrane protein insertion efficiency factor (88 aa).

The tract at residues Leu-67–Lys-88 is disordered. Positions Ser-79–Lys-88 are enriched in basic and acidic residues.

The protein belongs to the UPF0161 family.

It is found in the cell inner membrane. Its function is as follows. Could be involved in insertion of integral membrane proteins into the membrane. The protein is Putative membrane protein insertion efficiency factor of Actinobacillus succinogenes (strain ATCC 55618 / DSM 22257 / CCUG 43843 / 130Z).